The sequence spans 500 residues: MKKYIMALDQGTTSSRAILFDQEGKRVGSSQKEFTQFYPKAGWVEHDPMEIWGTQSGVAREVLETTGISTQDIAAIGITNQRETTIIWDKNTGKPIYNAIVWQCRRTAGICDELKAQGMETYIRENTGLVVDAYFSGTKVKWILDHVEGAREKAENGELLFGTVDSWLIWNLTRGKVHVTDYSNASRTMLYNIKELKWDEKILEALDIPKSMLPEVKASSEVYGHTDHQTFGGADIPIAGAAGDQQAALFGQACFQPGMAKNTYGTGCFMLMNTGEKFVPSENGLLTTLAWGVDGKVEYALEGSIFVAGAAVQWLRDELRIIRDAEDTEYLATKVADSNGVYVVPAFTGMGAPYWDMYARGAILGLTRGAKAEHIIRATLESIAYQTRDVLEAMQEDSGIELRSLKVDGGAVSNNFLMQFQADILGVQVDRPEIIETTALGAAYLAGLAVGFWRDKNEIANKWKVDTVFSPTMENTKKEKMYRGWKRAVNRALKWELEEE.

An ADP-binding site is contributed by T12. 3 residues coordinate ATP: T12, T13, and S14. Residue T12 participates in sn-glycerol 3-phosphate binding. R16 is a binding site for ADP. Residues R82, E83, Y134, and D244 each coordinate sn-glycerol 3-phosphate. Glycerol-binding residues include R82, E83, Y134, D244, and Q245. ADP contacts are provided by T266 and G309. Positions 266, 309, 313, and 410 each coordinate ATP. Residues G410 and N414 each coordinate ADP.

This sequence belongs to the FGGY kinase family. As to quaternary structure, homotetramer and homodimer (in equilibrium).

It catalyses the reaction glycerol + ATP = sn-glycerol 3-phosphate + ADP + H(+). It participates in polyol metabolism; glycerol degradation via glycerol kinase pathway; sn-glycerol 3-phosphate from glycerol: step 1/1. With respect to regulation, activated by phosphorylation and inhibited by fructose 1,6-bisphosphate (FBP). In terms of biological role, key enzyme in the regulation of glycerol uptake and metabolism. Catalyzes the phosphorylation of glycerol to yield sn-glycerol 3-phosphate. The sequence is that of Glycerol kinase from Alkaliphilus metalliredigens (strain QYMF).